The chain runs to 401 residues: Dihydrolipoyllysine-residue succinyltransferase component of 2-oxoglutarate dehydrogenase complex (401 aa).

The Lipoyl-binding domain maps to 2-77 (SVKIIVPSLG…AVGEEIGEIN (76 aa)). The residue at position 43 (Lys-43) is an N6-lipoyllysine. One can recognise a Peripheral subunit-binding (PSBD) domain in the interval 115–152 (ILAPSVQKLVTENKLDPNNIKGTGRDGRITKGDVLETI). Residues His-372 and Asp-376 contribute to the active site.

It belongs to the 2-oxoacid dehydrogenase family. As to quaternary structure, forms a 24-polypeptide structural core with octahedral symmetry. Part of the 2-oxoglutarate dehydrogenase (OGDH) complex composed of E1 (2-oxoglutarate dehydrogenase), E2 (dihydrolipoamide succinyltransferase) and E3 (dihydrolipoamide dehydrogenase); the complex contains multiple copies of the three enzymatic components (E1, E2 and E3). The cofactor is (R)-lipoate.

The catalysed reaction is N(6)-[(R)-dihydrolipoyl]-L-lysyl-[protein] + succinyl-CoA = N(6)-[(R)-S(8)-succinyldihydrolipoyl]-L-lysyl-[protein] + CoA. The protein operates within amino-acid degradation; L-lysine degradation via saccharopine pathway; glutaryl-CoA from L-lysine: step 6/6. In terms of biological role, E2 component of the 2-oxoglutarate dehydrogenase (OGDH) complex which catalyzes the second step in the conversion of 2-oxoglutarate to succinyl-CoA and CO(2). The sequence is that of Dihydrolipoyllysine-residue succinyltransferase component of 2-oxoglutarate dehydrogenase complex (sucB) from Rickettsia felis (strain ATCC VR-1525 / URRWXCal2) (Rickettsia azadi).